The following is a 240-amino-acid chain: Methylthioribulose-1-phosphate dehydratase (240 aa).

Substrate is bound at residue Cys-99. Zn(2+)-binding residues include His-116 and His-118. Glu-145 acts as the Proton donor/acceptor in catalysis. A Zn(2+)-binding site is contributed by His-201.

It belongs to the aldolase class II family. MtnB subfamily. The cofactor is Zn(2+).

Its subcellular location is the cytoplasm. The catalysed reaction is 5-(methylsulfanyl)-D-ribulose 1-phosphate = 5-methylsulfanyl-2,3-dioxopentyl phosphate + H2O. The protein operates within amino-acid biosynthesis; L-methionine biosynthesis via salvage pathway; L-methionine from S-methyl-5-thio-alpha-D-ribose 1-phosphate: step 2/6. In terms of biological role, catalyzes the dehydration of methylthioribulose-1-phosphate (MTRu-1-P) into 2,3-diketo-5-methylthiopentyl-1-phosphate (DK-MTP-1-P). This Paracoccidioides brasiliensis (strain Pb03) protein is Methylthioribulose-1-phosphate dehydratase.